Reading from the N-terminus, the 137-residue chain is Holo-[acyl-carrier-protein] synthase (137 aa).

Residues Asp8 and Glu57 each coordinate Mg(2+).

This sequence belongs to the P-Pant transferase superfamily. AcpS family. Mg(2+) serves as cofactor.

It is found in the cytoplasm. The enzyme catalyses apo-[ACP] + CoA = holo-[ACP] + adenosine 3',5'-bisphosphate + H(+). Functionally, transfers the 4'-phosphopantetheine moiety from coenzyme A to a Ser of acyl-carrier-protein. The protein is Holo-[acyl-carrier-protein] synthase of Hyphomonas neptunium (strain ATCC 15444).